We begin with the raw amino-acid sequence, 128 residues long: Large ribosomal subunit protein bL12 (128 aa).

It belongs to the bacterial ribosomal protein bL12 family. Homodimer. Part of the ribosomal stalk of the 50S ribosomal subunit. Forms a multimeric L10(L12)X complex, where L10 forms an elongated spine to which 2 to 4 L12 dimers bind in a sequential fashion. Binds GTP-bound translation factors.

In terms of biological role, forms part of the ribosomal stalk which helps the ribosome interact with GTP-bound translation factors. Is thus essential for accurate translation. This is Large ribosomal subunit protein bL12 from Halorhodospira halophila (strain DSM 244 / SL1) (Ectothiorhodospira halophila (strain DSM 244 / SL1)).